Reading from the N-terminus, the 29-residue chain is Photosystem I reaction center subunit XII (29 aa).

Residues 7 to 24 (FVALLLALVPAVLAYRLG) form a helical membrane-spanning segment.

The protein belongs to the PsaM family.

Its subcellular location is the cellular thylakoid membrane. The sequence is that of Photosystem I reaction center subunit XII from Synechococcus sp. (strain ATCC 27144 / PCC 6301 / SAUG 1402/1) (Anacystis nidulans).